Here is a 446-residue protein sequence, read N- to C-terminus: Phosphoglucosamine mutase (446 aa).

Ser101 acts as the Phosphoserine intermediate in catalysis. 4 residues coordinate Mg(2+): Ser101, Asp240, Asp242, and Asp244. A Phosphoserine modification is found at Ser101.

It belongs to the phosphohexose mutase family. The cofactor is Mg(2+). Activated by phosphorylation.

The catalysed reaction is alpha-D-glucosamine 1-phosphate = D-glucosamine 6-phosphate. Catalyzes the conversion of glucosamine-6-phosphate to glucosamine-1-phosphate. This is Phosphoglucosamine mutase from Pseudomonas putida (strain ATCC 47054 / DSM 6125 / CFBP 8728 / NCIMB 11950 / KT2440).